Reading from the N-terminus, the 189-residue chain is Elongation factor P 2 (189 aa).

Belongs to the elongation factor P family.

It is found in the cytoplasm. The protein operates within protein biosynthesis; polypeptide chain elongation. Functionally, involved in peptide bond synthesis. Stimulates efficient translation and peptide-bond synthesis on native or reconstituted 70S ribosomes in vitro. Probably functions indirectly by altering the affinity of the ribosome for aminoacyl-tRNA, thus increasing their reactivity as acceptors for peptidyl transferase. The polypeptide is Elongation factor P 2 (Mesorhizobium japonicum (strain LMG 29417 / CECT 9101 / MAFF 303099) (Mesorhizobium loti (strain MAFF 303099))).